We begin with the raw amino-acid sequence, 1082 residues long: Integrator complex subunit 3 homolog (1082 aa).

3 disordered regions span residues 483–563 (PGPP…VSDD), 923–945 (YPSNSPNKRKRPSKSAQQNTAPT), and 1005–1082 (DETS…SDSD). Composition is skewed to low complexity over residues 517–528 (PAAKAASTAASA) and 542–555 (TKPATTTTTTTTTT). Polar residues predominate over residues 936 to 945 (KSAQQNTAPT). Composition is skewed to low complexity over residues 1008 to 1018 (STTVGRRGTSS) and 1033 to 1056 (EKAAAAAAAAHANNSKKAAEASAK).

It belongs to the Integrator subunit 3 family. As to quaternary structure, belongs to the multiprotein complex Integrator. The core complex associates with protein phosphatase 2A subunits, to form the Integrator-PP2A (INTAC) complex.

It localises to the nucleus. The protein resides in the cytoplasm. Functionally, component of the integrator complex, a multiprotein complex that terminates RNA polymerase II (Pol II) transcription in the promoter-proximal region of genes. The integrator complex provides a quality checkpoint during transcription elongation by driving premature transcription termination of transcripts that are unfavorably configured for transcriptional elongation: the complex terminates transcription by (1) catalyzing dephosphorylation of the C-terminal domain (CTD) of Pol II subunit Polr2A/Rbp1 and Spt5, and (2) degrading the exiting nascent RNA transcript via endonuclease activity. The integrator complex is also involved in the 3'-end processing of the U7 snRNA, and also the spliceosomal snRNAs U1, U2, U4 and U5. This chain is Integrator complex subunit 3 homolog, found in Anopheles gambiae (African malaria mosquito).